The following is a 104-amino-acid chain: AVIToxin-VAR2 (104 aa).

The first 19 residues, 1–19 (MRSLLCAPLLLLLLSAGES), serve as a signal peptide directing secretion. 5 disulfide bridges follow: C26-C38, C32-C50, C37-C78, C60-C86, and C80-C96.

This sequence belongs to the AVIT (prokineticin) family. Expressed by the venom gland.

It is found in the secreted. Its function is as follows. Potent agonist for both PKR1/PROKR1 and PKR2/PROKR2. Potently contracts gastrointestinal (GI) smooth muscle. This chain is AVIToxin-VAR2, found in Varanus varius (Lace monitor lizard).